The sequence spans 56 residues: Bdellin B-3 (56 aa).

In terms of domain architecture, Kazal-like spans 1 to 42 (DTECVCTKELHRVCGSDGVTYDNECLATCHGASVAHDHACEG). Cystine bridges form between C4/C29, C6/C25, and C14/C40.

In terms of biological role, proteinase inhibitor. Blocks the activity of trypsin, plasmin and sperm acrosin. This chain is Bdellin B-3, found in Hirudo medicinalis (Medicinal leech).